A 491-amino-acid polypeptide reads, in one-letter code: Glycogen synthase 1 (491 aa).

Lys-15 contacts ADP-alpha-D-glucose.

This sequence belongs to the glycosyltransferase 1 family. Bacterial/plant glycogen synthase subfamily.

The catalysed reaction is [(1-&gt;4)-alpha-D-glucosyl](n) + ADP-alpha-D-glucose = [(1-&gt;4)-alpha-D-glucosyl](n+1) + ADP + H(+). It participates in glycan biosynthesis; glycogen biosynthesis. In terms of biological role, synthesizes alpha-1,4-glucan chains using ADP-glucose. This is Glycogen synthase 1 from Synechococcus sp. (strain JA-2-3B'a(2-13)) (Cyanobacteria bacterium Yellowstone B-Prime).